The primary structure comprises 473 residues: ATP synthase subunit beta (473 aa).

153 to 160 (GGAGVGKT) is a binding site for ATP.

It belongs to the ATPase alpha/beta chains family. In terms of assembly, F-type ATPases have 2 components, CF(1) - the catalytic core - and CF(0) - the membrane proton channel. CF(1) has five subunits: alpha(3), beta(3), gamma(1), delta(1), epsilon(1). CF(0) has three main subunits: a(1), b(2) and c(9-12). The alpha and beta chains form an alternating ring which encloses part of the gamma chain. CF(1) is attached to CF(0) by a central stalk formed by the gamma and epsilon chains, while a peripheral stalk is formed by the delta and b chains.

The protein localises to the cell inner membrane. The catalysed reaction is ATP + H2O + 4 H(+)(in) = ADP + phosphate + 5 H(+)(out). Produces ATP from ADP in the presence of a proton gradient across the membrane. The catalytic sites are hosted primarily by the beta subunits. The polypeptide is ATP synthase subunit beta (Rickettsia canadensis (strain McKiel)).